The following is a 322-amino-acid chain: MDSADPNEPTFPCPICDRRFIKSSLEKHESACRKLASLHRKPFDSGKQRASGSDLTYADIKKVQHEKNKNGGVFPRPQTNWRERHGNFIDAVSSSKRVDYALKTGAPLPPPPKTAVPSDYVQCEYCSRNFNAAAAERHIPFCREQATRKQGGNLKSSGGNRALTGNYRSTPSKNEGKKQESSSRNGSAERKPTTRGRDGSLLRARRDDSNDITSRRKSLDTRTSLTTGQASNRHTSLSAGMRPTLPPMTPSSKRSSSAKRDAPLQQSSTPQQRLKTPASTTTTASRSGSRTSSRACPRDDSRDSRLSQAKNNSRNNSRSRIF.

C2HC/C3H-type zinc fingers lie at residues 9–38 (PTFPCPICDRRFIKSSLEKHESACRKLASL) and 119–148 (DYVQCEYCSRNFNAAAAERHIPFCREQATR). 8 residues coordinate Zn(2+): cysteine 13, cysteine 16, histidine 28, cysteine 32, cysteine 123, cysteine 126, histidine 138, and cysteine 142. Over residues 150-159 (QGGNLKSSGG) the composition is skewed to polar residues. Residues 150-322 (QGGNLKSSGG…SRNNSRSRIF (173 aa)) form a disordered region. The segment covering 174–220 (NEGKKQESSSRNGSAERKPTTRGRDGSLLRARRDDSNDITSRRKSLD) has biased composition (basic and acidic residues). Polar residues-rich tracts occupy residues 221 to 238 (TRTSLTTGQASNRHTSLS) and 264 to 274 (LQQSSTPQQRL). The span at 276-295 (TPASTTTTASRSGSRTSSRA) shows a compositional bias: low complexity. Over residues 296 to 305 (CPRDDSRDSR) the composition is skewed to basic and acidic residues. The segment covering 311–322 (NNSRNNSRSRIF) has biased composition (low complexity).

The protein belongs to the ZC2HC1 family. The cofactor is Zn(2+).

The polypeptide is Zinc finger C2HC domain-containing protein zchc-1A (Caenorhabditis elegans).